The primary structure comprises 485 residues: ATP synthase subunit beta 2 (485 aa).

The span at Met1–Gln10 shows a compositional bias: basic and acidic residues. Residues Met1 to Ala27 are disordered. Residues Ile11–Glu24 are compositionally biased toward polar residues. Gly177 to Thr184 contacts ATP.

This sequence belongs to the ATPase alpha/beta chains family. F-type ATPases have 2 components, CF(1) - the catalytic core - and CF(0) - the membrane proton channel. CF(1) has five subunits: alpha(3), beta(3), gamma(1), delta(1), epsilon(1). CF(0) has three main subunits: a(1), b(2) and c(9-12). The alpha and beta chains form an alternating ring which encloses part of the gamma chain. CF(1) is attached to CF(0) by a central stalk formed by the gamma and epsilon chains, while a peripheral stalk is formed by the delta and b chains.

It localises to the cell inner membrane. The catalysed reaction is ATP + H2O + 4 H(+)(in) = ADP + phosphate + 5 H(+)(out). In terms of biological role, produces ATP from ADP in the presence of a proton gradient across the membrane. The catalytic sites are hosted primarily by the beta subunits. In Nitrosomonas eutropha (strain DSM 101675 / C91 / Nm57), this protein is ATP synthase subunit beta 2.